Consider the following 77-residue polypeptide: Large ribosomal subunit protein eL13 (77 aa).

Belongs to the eukaryotic ribosomal protein eL13 family.

This Sulfurisphaera tokodaii (strain DSM 16993 / JCM 10545 / NBRC 100140 / 7) (Sulfolobus tokodaii) protein is Large ribosomal subunit protein eL13.